We begin with the raw amino-acid sequence, 459 residues long: Elongation factor 1-alpha 4 (459 aa).

The region spanning Lys-5–Thr-242 is the tr-type G domain. Residues Gly-14–Ser-21 form a G1 region. Residues Gly-70–Asp-74 are G2. Residues Asp-91–Gly-94 are G3. Positions Asn-153 to Asp-156 are G4. Residues Ser-194–Phe-196 are G5. Glu-301 and Glu-374 each carry 5-glutamyl glycerylphosphorylethanolamine.

Belongs to the TRAFAC class translation factor GTPase superfamily. Classic translation factor GTPase family. EF-Tu/EF-1A subfamily.

It is found in the cytoplasm. Its function is as follows. This protein promotes the GTP-dependent binding of aminoacyl-tRNA to the A-site of ribosomes during protein biosynthesis. This Oscheius tipulae protein is Elongation factor 1-alpha 4 (eft-4).